The following is a 474-amino-acid chain: Bifunctional protein HldE (474 aa).

The segment at 1 to 318 is ribokinase; that stretch reads MKMTLPDFHC…ENAIRGRAET (318 aa). 195 to 198 serves as a coordination point for ATP; it reads NLSE. Asp-264 is an active-site residue. The segment at 344 to 474 is cytidylyltransferase; it reads MTNGCFDILH…TNIIKAIKNQ (131 aa).

In the N-terminal section; belongs to the carbohydrate kinase PfkB family. This sequence in the C-terminal section; belongs to the cytidylyltransferase family. In terms of assembly, homodimer.

The catalysed reaction is D-glycero-beta-D-manno-heptose 7-phosphate + ATP = D-glycero-beta-D-manno-heptose 1,7-bisphosphate + ADP + H(+). It carries out the reaction D-glycero-beta-D-manno-heptose 1-phosphate + ATP + H(+) = ADP-D-glycero-beta-D-manno-heptose + diphosphate. The protein operates within nucleotide-sugar biosynthesis; ADP-L-glycero-beta-D-manno-heptose biosynthesis; ADP-L-glycero-beta-D-manno-heptose from D-glycero-beta-D-manno-heptose 7-phosphate: step 1/4. It functions in the pathway nucleotide-sugar biosynthesis; ADP-L-glycero-beta-D-manno-heptose biosynthesis; ADP-L-glycero-beta-D-manno-heptose from D-glycero-beta-D-manno-heptose 7-phosphate: step 3/4. It participates in bacterial outer membrane biogenesis; LPS core biosynthesis. Functionally, catalyzes the phosphorylation of D-glycero-D-manno-heptose 7-phosphate at the C-1 position to selectively form D-glycero-beta-D-manno-heptose-1,7-bisphosphate. Catalyzes the ADP transfer from ATP to D-glycero-beta-D-manno-heptose 1-phosphate, yielding ADP-D-glycero-beta-D-manno-heptose. The polypeptide is Bifunctional protein HldE (Photorhabdus laumondii subsp. laumondii (strain DSM 15139 / CIP 105565 / TT01) (Photorhabdus luminescens subsp. laumondii)).